Reading from the N-terminus, the 102-residue chain is Small ribosomal subunit protein uS10 (102 aa).

The protein belongs to the universal ribosomal protein uS10 family. As to quaternary structure, part of the 30S ribosomal subunit.

Functionally, involved in the binding of tRNA to the ribosomes. This chain is Small ribosomal subunit protein uS10, found in Geobacillus kaustophilus (strain HTA426).